A 332-amino-acid chain; its full sequence is L-lactate dehydrogenase (332 aa).

NAD(+) is bound by residues 29 to 57 (GQVGMASAFSILAQNVSKEVCLIDVCADK) and Arg-99. The substrate site is built by Arg-106, Asn-138, and Arg-169. An NAD(+)-binding site is contributed by Asn-138. The active-site Proton acceptor is the His-193. Position 248 (Thr-248) interacts with substrate.

Belongs to the LDH/MDH superfamily. LDH family. As to quaternary structure, homotetramer.

It is found in the cytoplasm. The catalysed reaction is (S)-lactate + NAD(+) = pyruvate + NADH + H(+). The protein operates within fermentation; pyruvate fermentation to lactate; (S)-lactate from pyruvate: step 1/1. The sequence is that of L-lactate dehydrogenase from Drosophila melanogaster (Fruit fly).